The following is a 273-amino-acid chain: Dermonecrotic toxin LhSicTox-alphaIA2bii (273 aa).

His5 is a catalytic residue. Residues Glu25 and Asp27 each coordinate Mg(2+). His41 serves as the catalytic Nucleophile. Disulfide bonds link Cys45–Cys51 and Cys47–Cys190. A Mg(2+)-binding site is contributed by Asp85.

The protein belongs to the arthropod phospholipase D family. Class II subfamily. The cofactor is Mg(2+). In terms of tissue distribution, expressed by the venom gland.

It localises to the secreted. The enzyme catalyses an N-(acyl)-sphingosylphosphocholine = an N-(acyl)-sphingosyl-1,3-cyclic phosphate + choline. It catalyses the reaction an N-(acyl)-sphingosylphosphoethanolamine = an N-(acyl)-sphingosyl-1,3-cyclic phosphate + ethanolamine. It carries out the reaction a 1-acyl-sn-glycero-3-phosphocholine = a 1-acyl-sn-glycero-2,3-cyclic phosphate + choline. The catalysed reaction is a 1-acyl-sn-glycero-3-phosphoethanolamine = a 1-acyl-sn-glycero-2,3-cyclic phosphate + ethanolamine. Functionally, dermonecrotic toxins cleave the phosphodiester linkage between the phosphate and headgroup of certain phospholipids (sphingolipid and lysolipid substrates), forming an alcohol (often choline) and a cyclic phosphate. This toxin acts on sphingomyelin (SM). It may also act on ceramide phosphoethanolamine (CPE), lysophosphatidylcholine (LPC) and lysophosphatidylethanolamine (LPE), but not on lysophosphatidylserine (LPS), and lysophosphatidylglycerol (LPG). It acts by transphosphatidylation, releasing exclusively cyclic phosphate products as second products. Induces dermonecrosis, hemolysis, increased vascular permeability, edema, inflammatory response, and platelet aggregation. The chain is Dermonecrotic toxin LhSicTox-alphaIA2bii from Loxosceles hirsuta (Recluse spider).